Reading from the N-terminus, the 200-residue chain is dTTP/UTP pyrophosphatase (200 aa).

Aspartate 81 serves as the catalytic Proton acceptor.

Belongs to the Maf family. YhdE subfamily. A divalent metal cation serves as cofactor.

The protein localises to the cytoplasm. The catalysed reaction is dTTP + H2O = dTMP + diphosphate + H(+). The enzyme catalyses UTP + H2O = UMP + diphosphate + H(+). In terms of biological role, nucleoside triphosphate pyrophosphatase that hydrolyzes dTTP and UTP. May have a dual role in cell division arrest and in preventing the incorporation of modified nucleotides into cellular nucleic acids. The polypeptide is dTTP/UTP pyrophosphatase (Albidiferax ferrireducens (strain ATCC BAA-621 / DSM 15236 / T118) (Rhodoferax ferrireducens)).